We begin with the raw amino-acid sequence, 644 residues long: DNA gyrase subunit B (644 aa).

The 115-residue stretch at 429–543 (CEIFLVEGDS…AGYVYIAQPP (115 aa)) folds into the Toprim domain. The Mg(2+) site is built by glutamate 435, aspartate 508, and aspartate 510.

Belongs to the type II topoisomerase GyrB family. Heterotetramer, composed of two GyrA and two GyrB chains. In the heterotetramer, GyrA contains the active site tyrosine that forms a transient covalent intermediate with DNA, while GyrB binds cofactors and catalyzes ATP hydrolysis. Requires Mg(2+) as cofactor. Mn(2+) serves as cofactor. It depends on Ca(2+) as a cofactor.

The protein resides in the cytoplasm. It carries out the reaction ATP-dependent breakage, passage and rejoining of double-stranded DNA.. In terms of biological role, a type II topoisomerase that negatively supercoils closed circular double-stranded (ds) DNA in an ATP-dependent manner to modulate DNA topology and maintain chromosomes in an underwound state. Negative supercoiling favors strand separation, and DNA replication, transcription, recombination and repair, all of which involve strand separation. Also able to catalyze the interconversion of other topological isomers of dsDNA rings, including catenanes and knotted rings. Type II topoisomerases break and join 2 DNA strands simultaneously in an ATP-dependent manner. This Staphylococcus aureus (strain Mu50 / ATCC 700699) protein is DNA gyrase subunit B.